Consider the following 210-residue polypeptide: Ribosomal RNA large subunit methyltransferase E (210 aa).

S-adenosyl-L-methionine is bound by residues Gly67, Trp69, Asp87, Asp103, and Asp128. The active-site Proton acceptor is Lys168.

Belongs to the class I-like SAM-binding methyltransferase superfamily. RNA methyltransferase RlmE family.

It localises to the cytoplasm. It carries out the reaction uridine(2552) in 23S rRNA + S-adenosyl-L-methionine = 2'-O-methyluridine(2552) in 23S rRNA + S-adenosyl-L-homocysteine + H(+). Functionally, specifically methylates the uridine in position 2552 of 23S rRNA at the 2'-O position of the ribose in the fully assembled 50S ribosomal subunit. This is Ribosomal RNA large subunit methyltransferase E from Psychrobacter sp. (strain PRwf-1).